A 902-amino-acid chain; its full sequence is Gamma-tubulin complex component 2 (902 aa).

At Y83 the chain carries Phosphotyrosine. The segment at 875–902 (ERSQKAAPQVPVLRGPPAPAPRVAVTAQ) is disordered.

The protein belongs to the TUBGCP family. As to quaternary structure, component of the gamma-tubulin ring complex (gTuRC) consisting of TUBGCP2, TUBGCP3, TUBGCP4, TUBGCP5 and TUBGCP6 and gamma-tubulin TUBG1 or TUBG2. TUBGCP2, TUBGCP3, TUBGCP4, TUBGCP5 and TUBGCP6 assemble in a 5:5:2:1:1 stoichiometry; each is associated with a gamma-tubulin, thereby arranging 14 gamma-tubulins in a helical manner. Gamma-tubulin at the first position is blocked by TUBGCP3 at the last position, allowing 13 protafilaments to grow into a microtubule. The gTuRC (via TUBGCP3 and TUBGCP6) interacts with ACTB and MZT1; the interactions form a luminal bridge that stabilizes the initial structure during complex assembly. The gTuRC (via TUBGCP2) interacts with MZT2A/MZT2B and CDK5RAP2 (via CM1 motif); the interactions play a role in gTuRC activation. Interacts with ATF5; the ATF5:PCNT:polyglutamylated tubulin (PGT) tripartite unites the mother centriole and the pericentriolar material (PCM) in the centrosome.

It is found in the cytoplasm. Its subcellular location is the cytoskeleton. The protein localises to the microtubule organizing center. It localises to the centrosome. Component of the gamma-tubulin ring complex (gTuRC) which mediates microtubule nucleation. The gTuRC regulates the minus-end nucleation of alpha-beta tubulin heterodimers that grow into microtubule protafilaments, a critical step in centrosome duplication and spindle formation. Plays a role in neuronal migration. This chain is Gamma-tubulin complex component 2 (TUBGCP2), found in Pongo abelii (Sumatran orangutan).